The following is a 302-amino-acid chain: MRIVLITGISGSGKSVALNALEDAGYYCVDNLPPHVLPELARYLDEAGQRRLAVAIDARSSASLDEMPGLIRSLSREHDLRVLFLNASTQALIQRFSETRRRHPLSGSPSHDANVGLLSSLEEAIERERELVAPLAEFGHQIDTSTLRANVLRTWVKRFIEQNSNDLMLMFESFGFKRGVPLDADLMFDVRALPNPYYDHELRPLTGLDQPVIAFLDALPIVHQMIDDIHAFLMKWLPHFREDNRSYLTVAIGCTGGQHRSVFIAETLAARFASAANVIVRHRDAPVDVDASSRLVTEVDRP.

ATP is bound at residue glycine 8–serine 15. Aspartate 57 to serine 60 is a binding site for GTP.

Belongs to the RapZ-like family.

In terms of biological role, displays ATPase and GTPase activities. This is Nucleotide-binding protein Bmul_0520/BMULJ_02739 from Burkholderia multivorans (strain ATCC 17616 / 249).